The following is a 29-amino-acid chain: Trypsin inhibitor 1 (29 aa).

3 cysteine pairs are disulfide-bonded: C3–C20, C10–C22, and C16–C28.

The protein belongs to the protease inhibitor I7 (squash-type serine protease inhibitor) family.

The protein resides in the secreted. In terms of biological role, inhibits trypsin. In Luffa aegyptiaca (Sponge gourd), this protein is Trypsin inhibitor 1.